The sequence spans 249 residues: Ribonuclease HII (249 aa).

The RNase H type-2 domain maps to 30-221 (GPVAGVDEVG…VRRLVMDGEP (192 aa)). Residues Asp-36, Glu-37, and Asp-130 each coordinate a divalent metal cation.

This sequence belongs to the RNase HII family. Mn(2+) serves as cofactor. Mg(2+) is required as a cofactor.

The protein resides in the cytoplasm. The catalysed reaction is Endonucleolytic cleavage to 5'-phosphomonoester.. Its function is as follows. Endonuclease that specifically degrades the RNA of RNA-DNA hybrids. The chain is Ribonuclease HII from Mycolicibacterium vanbaalenii (strain DSM 7251 / JCM 13017 / BCRC 16820 / KCTC 9966 / NRRL B-24157 / PYR-1) (Mycobacterium vanbaalenii).